Consider the following 255-residue polypeptide: Menaquinol:cytochrome c reductase cytochrome c subunit (255 aa).

The next 3 helical transmembrane spans lie at 46–62 (WMVG…LTIV), 104–124 (VVGA…APFL), and 137–157 (VAVG…WQSV). In terms of domain architecture, Cytochrome c spans 178–253 (DTNAEGYKVF…ELAKFISETT (76 aa)). Residues Cys-192, Cys-195, and His-196 each coordinate heme c.

Belongs to the cytochrome b family. The main subunits of the menaquinol:cytochrome c complex are a Rieske-type iron-sulfur protein (QcrA), a cytochrome b (QcrB) and a cytochrome c (QcrC). Heme c is required as a cofactor.

It is found in the cell membrane. In terms of biological role, component of the menaquinol:cytochrome c reductase complex. In Bacillus subtilis (strain 168), this protein is Menaquinol:cytochrome c reductase cytochrome c subunit (qcrC).